A 159-amino-acid polypeptide reads, in one-letter code: Large ribosomal subunit protein uL30 (159 aa).

It belongs to the universal ribosomal protein uL30 family. Part of the 50S ribosomal subunit.

This is Large ribosomal subunit protein uL30 from Ignicoccus hospitalis (strain KIN4/I / DSM 18386 / JCM 14125).